The following is a 91-amino-acid chain: Small membrane A-kinase anchor protein (91 aa).

Residue Gly2 is the site of N-myristoyl glycine attachment.

This sequence belongs to the small membrane AKAP family. Post-translationally, may be palmitoylated at Cys-3.

It is found in the cell membrane. Functionally, binds to type I regulatory subunits of protein kinase A and may anchor/target them to the plasma membrane. The sequence is that of Small membrane A-kinase anchor protein from Xenopus tropicalis (Western clawed frog).